The chain runs to 426 residues: Serine--tRNA ligase (426 aa).

233–235 (TSE) contacts L-serine. 264-266 (RSE) is an ATP binding site. Glu287 is an L-serine binding site. Residue 351-354 (EISS) coordinates ATP. Residue Ser387 participates in L-serine binding.

It belongs to the class-II aminoacyl-tRNA synthetase family. Type-1 seryl-tRNA synthetase subfamily. Homodimer. The tRNA molecule binds across the dimer.

The protein resides in the cytoplasm. The enzyme catalyses tRNA(Ser) + L-serine + ATP = L-seryl-tRNA(Ser) + AMP + diphosphate + H(+). It catalyses the reaction tRNA(Sec) + L-serine + ATP = L-seryl-tRNA(Sec) + AMP + diphosphate + H(+). The protein operates within aminoacyl-tRNA biosynthesis; selenocysteinyl-tRNA(Sec) biosynthesis; L-seryl-tRNA(Sec) from L-serine and tRNA(Sec): step 1/1. Catalyzes the attachment of serine to tRNA(Ser). Is also able to aminoacylate tRNA(Sec) with serine, to form the misacylated tRNA L-seryl-tRNA(Sec), which will be further converted into selenocysteinyl-tRNA(Sec). This Colwellia psychrerythraea (strain 34H / ATCC BAA-681) (Vibrio psychroerythus) protein is Serine--tRNA ligase.